The primary structure comprises 125 residues: Histone H2A (125 aa).

Positions 1–18 (MSGRGKGGKARAKAKSRS) are enriched in basic residues. Positions 1-21 (MSGRGKGGKARAKAKSRSSRA) are disordered. At S2 the chain carries N-acetylserine. S2 carries the phosphoserine modification. Q104 carries the N5-methylglutamine modification.

This sequence belongs to the histone H2A family. The nucleosome is a histone octamer containing two molecules each of H2A, H2B, H3 and H4 assembled in one H3-H4 heterotetramer and two H2A-H2B heterodimers. The octamer wraps approximately 147 bp of DNA.

It localises to the nucleus. Its subcellular location is the chromosome. Its function is as follows. Core component of nucleosome. Nucleosomes wrap and compact DNA into chromatin, limiting DNA accessibility to the cellular machineries which require DNA as a template. Histones thereby play a central role in transcription regulation, DNA repair, DNA replication and chromosomal stability. DNA accessibility is regulated via a complex set of post-translational modifications of histones, also called histone code, and nucleosome remodeling. This chain is Histone H2A, found in Asterias rubens (Common European starfish).